Here is a 559-residue protein sequence, read N- to C-terminus: Actin-binding protein WASF1 (559 aa).

Disordered stretches follow at residues 169–202 (TEDK…DRRR), 307–400 (RPQS…SPPV), and 412–492 (VHPL…STLP). The span at 182–202 (KNLDRPHEPEKVPRAPHDRRR) shows a compositional bias: basic and acidic residues. The segment covering 322–332 (PTPPPPPPPLP) has biased composition (pro residues). Over residues 333 to 346 (SALSTSSLRASMTS) the composition is skewed to low complexity. R341 is subject to Asymmetric dimethylarginine; alternate. At R341 the chain carries Omega-N-methylarginine; alternate. Composition is skewed to pro residues over residues 347 to 374 (TPPP…PPAP), 384 to 399 (PAPP…PSPP), 423 to 437 (LPPP…PPGI), and 458 to 477 (TPSP…PPSQ). S489 is modified (phosphoserine). A WH2 domain is found at 497–514 (ARSVLLEAIRKGIQLRKV).

This sequence belongs to the SCAR/WAVE family. Component of the WAVE1 complex composed of ABI2, CYFIP1 or CYFIP2, BRK1, NCKAP1 and WASF1/WAVE1. Within the complex, a heterodimer containing NCKAP1 and CYFIP1 interacts with a heterotrimer formed by WAVE1, ABI2 and BRK1. CYFIP2 binds to activated RAC1 which causes the complex to dissociate, releasing activated WASF1. The complex can also be activated by NCK1. Binds actin and the Arp2/3 complex. Interacts with BAIAP2. Interacts with SHANK3; the interaction mediates the association of SHANK3 with the WAVE1 complex. Interacts with ABI1 (via N-terminus). Interacts with SORBS2; this interaction greatly enhances phosphorylation by ABL1 and dephosphorylation by PTPN12 and might mediate partial to focal adhesion sites. Expressed in hippocampal neurons (at protein level).

The protein resides in the cytoplasm. It is found in the cytoskeleton. Its subcellular location is the synapse. The protein localises to the cell junction. It localises to the focal adhesion. Functionally, downstream effector molecule involved in the transmission of signals from tyrosine kinase receptors and small GTPases to the actin cytoskeleton. Promotes formation of actin filaments. Part of the WAVE complex that regulates lamellipodia formation. The WAVE complex regulates actin filament reorganization via its interaction with the Arp2/3 complex. As component of the WAVE1 complex, required for BDNF-NTRK2 endocytic trafficking and signaling from early endosomes. Also involved in the regulation of mitochondrial dynamics. This is Actin-binding protein WASF1 (Wasf1) from Rattus norvegicus (Rat).